The primary structure comprises 174 residues: Peptidyl-prolyl cis-trans isomerase-like 1 (174 aa).

The PPIase cyclophilin-type domain maps to 5 to 159 (SPTYVTFDTS…EEIKIHRARL (155 aa)).

It belongs to the cyclophilin-type PPIase family. PPIL1 subfamily.

The catalysed reaction is [protein]-peptidylproline (omega=180) = [protein]-peptidylproline (omega=0). PPIases accelerate the folding of proteins. It catalyzes the cis-trans isomerization of proline imidic peptide bonds in oligopeptides. The polypeptide is Peptidyl-prolyl cis-trans isomerase-like 1 (CYP1) (Cryptococcus neoformans var. neoformans serotype D (strain B-3501A) (Filobasidiella neoformans)).